Reading from the N-terminus, the 392-residue chain is Neutrophil cytosol factor 1 (392 aa).

The 122-residue stretch at 4–125 (HFIRHIALLG…NFFKVRPDDL (122 aa)) folds into the PX domain. SH3 domains follow at residues 156–215 (IILQ…PLDS) and 226–285 (YAGE…KAGQ). Residues 290–392 (AKSQIKSRGA…STKRKLASAV (103 aa)) form a disordered region. Residues Ser304 and Ser305 each carry the phosphoserine modification. Over residues 310–319 (HSIHQRSRKR) the composition is skewed to basic residues. Phosphoserine occurs at positions 321, 329, and 348. Residues 376–385 (ILHRCSESTK) are compositionally biased toward basic and acidic residues.

In terms of assembly, component of the phagocyte NADPH oxidase complex composed of an obligatory core heterodimer formed by the membrane proteins CYBA and CYBB and the cytosolic regulatory subunits NCF1/p47-phox, NCF2/p67-phox, NCF4/p40-phox and the small GTPase RAC1 or RAC2. Part of a cytosolic complex composed at least by NCF1, NCF2 and NCF4. Interacts (via C-terminus) with NCF2 (via the C-terminal SH3 domain). Interacts with NCF4. Interacts with CYBB. Interacts (via the second SH3 domain) with CYBA; interaction is phosphorylation-dependent. Interacts with NOXA1. Interacts with ADAM15. Interacts with TRAF4. Interacts with FASLG. Interacts with PARK7 (via C-terminus); the interaction is enhanced by LPS and modulates NCF1 phosphorylation and membrane translocation. Phosphorylated by PRKCD; phosphorylation induces activation of NCF1, leading to assembly and activation of the NADPH oxidase complex.

It is found in the cytoplasm. Its subcellular location is the cytosol. The protein resides in the membrane. In terms of biological role, subunit of the phagocyte NADPH oxidase complex that mediates the transfer of electrons from cytosolic NADPH to O2 to produce the superoxide anion (O2(-)). In the activated complex, electrons are first transferred from NADPH to flavin adenine dinucleotide (FAD) and subsequently transferred via two heme molecules to molecular oxygen, producing superoxide through an outer-sphere reaction. Activation of the NADPH oxidase complex is initiated by the assembly of cytosolic subunits of the NADPH oxidase complex with the core NADPH oxidase complex to form a complex at the plasma membrane or phagosomal membrane. This activation process is initiated by phosphorylation dependent binding of the cytosolic NCF1/p47-phox subunit to the C-terminus of CYBA/p22-phox. The sequence is that of Neutrophil cytosol factor 1 from Bos taurus (Bovine).